Here is a 444-residue protein sequence, read N- to C-terminus: Chitinase-like protein Idgf5 (444 aa).

Positions Met-1 to Ala-26 are cleaved as a signal peptide. Positions Gly-29 to Leu-444 constitute a GH18 domain. Cysteines 33 and 60 form a disulfide. N-linked (GlcNAc...) asparagine glycans are attached at residues Asn-289 and Asn-311. Cysteines 349 and 429 form a disulfide.

It belongs to the glycosyl hydrolase 18 family. IDGF subfamily. Glycosylated.

The protein resides in the secreted. Its function is as follows. Probably required to stimulate the proliferation, polarization and motility of imaginal disk cells. May act by stabilizing the binding of insulin-like peptides to its receptor through a simultaneous interaction with both molecules to form a multiprotein signaling complex. This chain is Chitinase-like protein Idgf5 (Idgf5), found in Drosophila melanogaster (Fruit fly).